Consider the following 579-residue polypeptide: Matrix metalloproteinase-C (579 aa).

The first 17 residues, 1–17, serve as a signal peptide directing secretion; that stretch reads MRLIYVIAILLVSTCQA. Residues 18–129 constitute a propeptide, activation peptide; sequence GFFSSLVSRF…SRCGVTDAPL (112 aa). The tract at residues 32-51 is disordered; it reads NSSPSSSSSSSSFSNSRKPS. A compositionally biased stretch (low complexity) spans 33-50; the sequence is SSPSSSSSSSSFSNSRKP. A Cysteine switch motif is present at residues 120–127; it reads SRCGVTDA. Residues Cys122, His200, Asp202, His215, and His225 each contribute to the Zn(2+) site. Residue Asn231 is glycosylated (N-linked (GlcNAc...) asparagine). His254 contacts Zn(2+). Glu255 is an active-site residue. Zn(2+)-binding residues include His258 and His264. The tract at residues 307–394 is disordered; the sequence is SGRSSSGSDF…SSSGSSGGGC (88 aa). Positions 315-324 are enriched in gly residues; the sequence is DFGGSSGGGS. The span at 325–341 shows a compositional bias: low complexity; sequence RTTARPTTTTRSWFGRF. Gly residues predominate over residues 373 to 394; that stretch reads WGSGSGSSGRGGSSSGSSGGGC. Hemopexin repeat units follow at residues 395 to 437 and 438 to 490; these read PSHI…FPSA and PTPV…LGFS.

Belongs to the peptidase M10A family. It depends on Zn(2+) as a cofactor.

It localises to the secreted. The protein resides in the extracellular space. The protein localises to the extracellular matrix. Inhibited by human TIMP1 and TIMP2 and the broad MMP inhibitors BB94 (Batimastat) and CT543. Functionally, metalloproteinase. The chain is Matrix metalloproteinase-C from Caenorhabditis elegans.